The following is a 537-amino-acid chain: RNA polymerase sigma-54 factor 2 (537 aa).

Positions 52–90 (ANDEASGGEAPAEAGQFSDSDGGHNDEPGGGPGEAFEPG) are disordered. Residues 55-66 (EASGGEAPAEAG) are compositionally biased toward low complexity. Residues 403–422 (NLKAVADAIQMHESTVSRVT) constitute a DNA-binding region (H-T-H motif). The RPON box signature appears at 492–500 (ARRTVAKYR). The interval 507–537 (SSVQRRRDKQSALGNVLSTAMSDRSRNPEPA) is disordered. Residues 518-528 (ALGNVLSTAMS) are compositionally biased toward polar residues.

It belongs to the sigma-54 factor family.

In terms of biological role, sigma factors are initiation factors that promote the attachment of RNA polymerase to specific initiation sites and are then released. This sigma factor is responsible for the expression of the nitrogen fixation genes. This chain is RNA polymerase sigma-54 factor 2 (rpoN2), found in Bradyrhizobium diazoefficiens (strain JCM 10833 / BCRC 13528 / IAM 13628 / NBRC 14792 / USDA 110).